Consider the following 58-residue polypeptide: Ribosome biogenesis protein Nop10 (58 aa).

This sequence belongs to the NOP10 family.

Functionally, involved in ribosome biogenesis; more specifically in 18S rRNA pseudouridylation and in cleavage of pre-rRNA. This is Ribosome biogenesis protein Nop10 from Methanobrevibacter smithii (strain ATCC 35061 / DSM 861 / OCM 144 / PS).